A 462-amino-acid polypeptide reads, in one-letter code: Argininosuccinate lyase (462 aa).

The protein belongs to the lyase 1 family. Argininosuccinate lyase subfamily.

It is found in the cytoplasm. The enzyme catalyses 2-(N(omega)-L-arginino)succinate = fumarate + L-arginine. It functions in the pathway amino-acid biosynthesis; L-arginine biosynthesis; L-arginine from L-ornithine and carbamoyl phosphate: step 3/3. In Nitratiruptor sp. (strain SB155-2), this protein is Argininosuccinate lyase.